Here is a 158-residue protein sequence, read N- to C-terminus: 6,7-dimethyl-8-ribityllumazine synthase (158 aa).

5-amino-6-(D-ribitylamino)uracil contacts are provided by residues F22, 57-59, and 81-83; these read AYE and AVI. 86-87 is a binding site for (2S)-2-hydroxy-3-oxobutyl phosphate; the sequence is GT. The active-site Proton donor is H89. F114 is a binding site for 5-amino-6-(D-ribitylamino)uracil. R128 lines the (2S)-2-hydroxy-3-oxobutyl phosphate pocket.

Belongs to the DMRL synthase family. As to quaternary structure, forms an icosahedral capsid composed of 60 subunits, arranged as a dodecamer of pentamers.

It catalyses the reaction (2S)-2-hydroxy-3-oxobutyl phosphate + 5-amino-6-(D-ribitylamino)uracil = 6,7-dimethyl-8-(1-D-ribityl)lumazine + phosphate + 2 H2O + H(+). It functions in the pathway cofactor biosynthesis; riboflavin biosynthesis; riboflavin from 2-hydroxy-3-oxobutyl phosphate and 5-amino-6-(D-ribitylamino)uracil: step 1/2. Catalyzes the formation of 6,7-dimethyl-8-ribityllumazine by condensation of 5-amino-6-(D-ribitylamino)uracil with 3,4-dihydroxy-2-butanone 4-phosphate. This is the penultimate step in the biosynthesis of riboflavin. This is 6,7-dimethyl-8-ribityllumazine synthase from Pseudoalteromonas atlantica (strain T6c / ATCC BAA-1087).